The sequence spans 444 residues: Orexin receptor type 2 (444 aa).

A compositionally biased stretch (basic and acidic residues) spans 1 to 10 (MSGTKLEDSP). The disordered stretch occupies residues 1–20 (MSGTKLEDSPPCRNWSSASE). The Extracellular portion of the chain corresponds to 1–54 (MSGTKLEDSPPCRNWSSASELNETQEPFLNPTDYDDEEFLRYLWREYLHPKEYE). Asparagine 14 and asparagine 22 each carry an N-linked (GlcNAc...) asparagine glycan. Positions 33-49 (DYDDEEFLRYLWREYLH) are required for response to orexin-A. A helical transmembrane segment spans residues 55–75 (WVLIAGYIIVFVVALIGNVLV). Residues 76–88 (CVAVWKNHHMRTV) are Cytoplasmic-facing. The helical transmembrane segment at 89–110 (TNYFIVNLSLADVLVTITCLPA) threads the bilayer. At 111–127 (TLVVDITETWFFGQSLC) the chain is on the extracellular side. A disulfide bond links cysteine 127 and cysteine 210. A helical transmembrane segment spans residues 128-150 (KVIPYLQTVSVSVSVLTLSCIAL). The Cytoplasmic portion of the chain corresponds to 151-170 (DRWYAICHPLMFKSTAKRAR). Residues 171 to 191 (NSIVIIWIVSCIIMIPQAIVM) form a helical membrane-spanning segment. At 192-222 (ECSTVFPGLANKTTLFTVCDERWGGEIYPKM) the chain is on the extracellular side. Asparagine 202 carries an N-linked (GlcNAc...) asparagine glycan. Residues 223–243 (YHICFFLVTYMAPLCLMVLAY) form a helical membrane-spanning segment. Over 244 to 304 (LQIFRKLWCR…QIRARRKTAR (61 aa)) the chain is Cytoplasmic. The chain crosses the membrane as a helical span at residues 305–326 (MLMIVLLVFAICYLPISILNVL). Asparagine 324 lines the suvorexant pocket. Residues 327-342 (KRVFGMFAHTEDRETV) lie on the Extracellular side of the membrane. Residues 343–366 (YAWFTFSHWLVYANSAANPIIYNF) traverse the membrane as a helical segment. Topologically, residues 367–444 (LSGKFREEFK…ANGAGPLQNW (78 aa)) are cytoplasmic.

It belongs to the G-protein coupled receptor 1 family.

The protein localises to the cell membrane. Nonselective, high-affinity receptor for both orexin-A and orexin-B neuropeptides. Triggers an increase in cytoplasmic Ca(2+) levels in response to orexin-A binding. In Homo sapiens (Human), this protein is Orexin receptor type 2 (HCRTR2).